The chain runs to 541 residues: Myrosinase 1 (541 aa).

The first 19 residues, 1 to 19, serve as a signal peptide directing secretion; it reads MKLLMLAFVFLLALATCKG. 3 disulfides stabilise this stretch: Cys24/Cys449, Cys32/Cys445, and Cys224/Cys232. An N-linked (GlcNAc...) asparagine glycan is attached at Asn33. Residue Gln57 participates in a beta-D-glucoside binding. N-linked (GlcNAc...) asparagine glycosylation is present at Asn108. His159 contributes to the a beta-D-glucoside binding site. The N-linked (GlcNAc...) asparagine glycan is linked to Asn175. Residue 204–205 participates in a beta-D-glucoside binding; that stretch reads NQ. Asn236 is a glycosylation site (N-linked (GlcNAc...) asparagine). Tyr348 contributes to the a beta-D-glucoside binding site. Asn356 and Asn379 each carry an N-linked (GlcNAc...) asparagine glycan. A beta-D-glucoside-binding positions include Glu420, Trp468, 475 to 476, and Phe484; that span reads EF. Glu420 (nucleophile) is an active-site residue. 2 N-linked (GlcNAc...) asparagine glycosylation sites follow: Asn493 and Asn512.

It belongs to the glycosyl hydrolase 1 family. In terms of assembly, homodimer. In terms of tissue distribution, expressed in guard cells, phloem-associated cells and myrosin cells.

The protein localises to the vacuole. The enzyme catalyses a thioglucoside + H2O = a sugar + a thiol.. It carries out the reaction Hydrolysis of terminal, non-reducing beta-D-glucosyl residues with release of beta-D-glucose.. Degradation of glucosinolates (glucose residue linked by a thioglucoside bound to an amino acid derivative) to glucose, sulfate and any of the products: thiocyanates, isothiocyanates, nitriles, epithionitriles or oxazolidine-2-thiones. These toxic degradation products can deter insect herbivores. Seems to function in abscisic acid (ABA) and methyl jasmonate (MeJA) signaling in guard cells. Functionally redundant with TGG2. Hydrolyzes sinigrin and, with lower efficiency, p-nitrophenyl beta-D-glucoside. The polypeptide is Myrosinase 1 (Arabidopsis thaliana (Mouse-ear cress)).